We begin with the raw amino-acid sequence, 78 residues long: Large ribosomal subunit protein bL28 (78 aa).

The interval Met-1–His-20 is disordered.

This sequence belongs to the bacterial ribosomal protein bL28 family.

The protein is Large ribosomal subunit protein bL28 of Azotobacter vinelandii (strain DJ / ATCC BAA-1303).